Reading from the N-terminus, the 638-residue chain is MQALMEMQIGASEVVQVLDTGCAVLPPESPLPMPEQSLRKGRLQVPRQRTAPLGIGLRRFYLIGGTMAMSLIATWVMLAVMWPGGINVLEGCLLVLFMFLFAWVTMSFASALAGFFCVVFGGGRKLGIDPQVPLPDLHTYTALLVPTYHEDPCRLLAGLQAIYESLAETGQLEHFDFFVLSDSRREEFGLAEEREYAALCERLGAHDRIFYRRRADNAGRKAGNIADWVRRFGGAYQQMLILDADSVMTGDTIVRLVAAMESNPDVGLIQSLPVVVGGRTLFARMQQFGACVYGPIIAYGVAWWHGAESNYWGHNAVIRTKAFADHAGLPALPGRKPFGGHVLSHDFVEAALIRRGGWATHMVPYLQGSYEEGPPTLTDLLIRDRRWCQGNLQHAKIVTAAGLHWISRMHMLIGIGHYFTAPMWGLLMLVGIAIPLVGDGIDLTAGMHFSPAHYWHGRTDGDVLWIFTFTMFVLLAPKLLAYFALLFKPYERRACGGALRVLLSILLESILAALMAPVVMYLQSRGVFEVLAGKDSGWDAQQRDDGKLSWSVLLRSYGGLSVLGVLIGALAYTVSPPLAMWMSPVVLGMAFSVPVVALTSHRLVGAVLRRWGIFLIPEETAPSKVLIRVAELRRARQP.

6 consecutive transmembrane segments (helical) span residues 60-82 (FYLIGGTMAMSLIATWVMLAVMW), 97-119 (FMFLFAWVTMSFASALAGFFCVV), 415-437 (IGHYFTAPMWGLLMLVGIAIPLV), 464-486 (LWIFTFTMFVLLAPKLLAYFALL), 499-521 (LRVLLSILLESILAALMAPVVMY), and 578-600 (LAMWMSPVVLGMAFSVPVVALTS).

It belongs to the glycosyltransferase 2 family. OpgH subfamily.

Its subcellular location is the cell inner membrane. It participates in glycan metabolism; osmoregulated periplasmic glucan (OPG) biosynthesis. Functionally, involved in the biosynthesis of osmoregulated periplasmic glucans (OPGs). This is Glucans biosynthesis glucosyltransferase H from Xylella fastidiosa (strain 9a5c).